The primary structure comprises 304 residues: CBY1-interacting BAR domain-containing protein 2 (304 aa).

Residues 6–217 are BAR-like; the sequence is SRDSQVRVME…EKYDLERDLL (212 aa).

Belongs to the CIBAR family. As to quaternary structure, homodimer (via BAR-like domain). Heterodimer (via BAR-like domain) with FAM92A. Interacts with CBY1. Restricted to certain tissues, most prominently expressed in multicilaited tissues.

It is found in the cytoplasm. The protein localises to the cytoskeleton. Its subcellular location is the microtubule organizing center. It localises to the centrosome. The protein resides in the centriole. It is found in the cilium basal body. May play a role in ciliogenesis. In cooperation with CBY1 may facilitate ciliogenesis likely by the recruitment and fusion of endosomal vesicles at distal appendages during early stages of ciliogenesis. In Homo sapiens (Human), this protein is CBY1-interacting BAR domain-containing protein 2.